The chain runs to 123 residues: Large ribosomal subunit protein bL17 (123 aa).

It belongs to the bacterial ribosomal protein bL17 family. As to quaternary structure, part of the 50S ribosomal subunit. Contacts protein L32.

This Borrelia garinii subsp. bavariensis (strain ATCC BAA-2496 / DSM 23469 / PBi) (Borreliella bavariensis) protein is Large ribosomal subunit protein bL17.